The sequence spans 548 residues: CTP synthase (548 aa).

An amidoligase domain region spans residues 1-266 (MRVNYIFVTG…DNYICKRFNL (266 aa)). Ser14 contributes to the CTP binding site. A UTP-binding site is contributed by Ser14. ATP-binding positions include 15 to 20 (SLGKGI) and Asp72. The Mg(2+) site is built by Asp72 and Glu140. CTP contacts are provided by residues 147-149 (DIE), 187-192 (KTKPTQ), and Lys223. Residues 187–192 (KTKPTQ) and Lys223 contribute to the UTP site. Residues 291–543 (TVGMVGKYIE…IKAAIEYQHR (253 aa)) enclose the Glutamine amidotransferase type-1 domain. Gly353 is an L-glutamine binding site. The active-site Nucleophile; for glutamine hydrolysis is Cys380. L-glutamine-binding positions include 381 to 384 (LGMQ), Glu404, and Arg471. Active-site residues include His516 and Glu518.

Belongs to the CTP synthase family. In terms of assembly, homotetramer.

The enzyme catalyses UTP + L-glutamine + ATP + H2O = CTP + L-glutamate + ADP + phosphate + 2 H(+). It catalyses the reaction L-glutamine + H2O = L-glutamate + NH4(+). It carries out the reaction UTP + NH4(+) + ATP = CTP + ADP + phosphate + 2 H(+). It functions in the pathway pyrimidine metabolism; CTP biosynthesis via de novo pathway; CTP from UDP: step 2/2. With respect to regulation, allosterically activated by GTP, when glutamine is the substrate; GTP has no effect on the reaction when ammonia is the substrate. The allosteric effector GTP functions by stabilizing the protein conformation that binds the tetrahedral intermediate(s) formed during glutamine hydrolysis. Inhibited by the product CTP, via allosteric rather than competitive inhibition. Its function is as follows. Catalyzes the ATP-dependent amination of UTP to CTP with either L-glutamine or ammonia as the source of nitrogen. Regulates intracellular CTP levels through interactions with the four ribonucleotide triphosphates. The protein is CTP synthase of Blochmanniella pennsylvanica (strain BPEN).